The primary structure comprises 404 residues: Ribosomal RNA large subunit methyltransferase F (404 aa).

2 stretches are compositionally biased toward basic residues: residues 1-10 (MTKHSQKQNR) and 18-29 (QTRRKKPAGKLK). Disordered stretches follow at residues 1–54 (MTKH…HERN), 156–177 (GTRQ…QRYK), and 289–308 (RAAK…PDAN). The segment covering 30–54 (AKSEAKLDTRGKPETTEKKGLHERN) has biased composition (basic and acidic residues). The segment covering 157-172 (TRQNVPYASKPESSAP) has biased composition (polar residues).

Belongs to the methyltransferase superfamily. METTL16/RlmF family.

It is found in the cytoplasm. The catalysed reaction is adenosine(1618) in 23S rRNA + S-adenosyl-L-methionine = N(6)-methyladenosine(1618) in 23S rRNA + S-adenosyl-L-homocysteine + H(+). Specifically methylates the adenine in position 1618 of 23S rRNA. The sequence is that of Ribosomal RNA large subunit methyltransferase F from Shewanella sediminis (strain HAW-EB3).